The following is a 558-amino-acid chain: Galactoside 2-alpha-L-fucosyltransferase (558 aa).

Residues 1–43 (MDQNSYRRRSSPIRTTTGGSKSVNFSELLQMKYLSSGTMKLTR) lie on the Cytoplasmic side of the membrane. Residues 44–64 (TFTTCLIVFSVLVAFSMIFHQ) traverse the membrane as a helical; Signal-anchor for type II membrane protein segment. Over 65–558 (HPSDSNRIMG…EDISWGLKLV (494 aa)) the chain is Lumenal. N-linked (GlcNAc...) asparagine glycosylation is found at Asn-88 and Asn-504.

It belongs to the glycosyltransferase 37 family. As to quaternary structure, homodimer. Interacts with MUR3, XLT2, XXT2 and XXT5. In terms of tissue distribution, expressed in roots, stems, leaves, flowers, siliques and seedlings.

The protein resides in the golgi apparatus. Its subcellular location is the golgi stack membrane. It is found in the golgi apparatus membrane. In terms of biological role, involved in cell wall biosynthesis. Is both necessary and sufficient for the addition of the terminal fucosyl residue on xyloglucan side chains, but is not involved in the fucosylation of other cell wall components. Associates with other xyloglucan-synthesizing enzymes to form multiprotein complexes for xyloglucan synthesis in the Golgi. The sequence is that of Galactoside 2-alpha-L-fucosyltransferase (FUT1) from Arabidopsis thaliana (Mouse-ear cress).